Reading from the N-terminus, the 622-residue chain is Chaperone protein HscA homolog (622 aa).

The protein belongs to the heat shock protein 70 family.

Chaperone involved in the maturation of iron-sulfur cluster-containing proteins. Has a low intrinsic ATPase activity which is markedly stimulated by HscB. The chain is Chaperone protein HscA homolog from Verminephrobacter eiseniae (strain EF01-2).